Reading from the N-terminus, the 324-residue chain is D-alanine--D-alanine ligase (324 aa).

The ATP-grasp domain occupies 121–321 (NQYLKAFGVR…IKDVMTDIIE (201 aa)). ATP is bound at residue 149-204 (VEKIGLPCFIKPNLGGSSFGVTKVKTREQIQPAIAKAFSEAEEVMIEAFMGGTELT). 3 residues coordinate Mg(2+): D275, E288, and N290.

This sequence belongs to the D-alanine--D-alanine ligase family. The cofactor is Mg(2+). It depends on Mn(2+) as a cofactor.

It localises to the cytoplasm. The catalysed reaction is 2 D-alanine + ATP = D-alanyl-D-alanine + ADP + phosphate + H(+). It functions in the pathway cell wall biogenesis; peptidoglycan biosynthesis. Cell wall formation. The polypeptide is D-alanine--D-alanine ligase (Bacteroides fragilis (strain ATCC 25285 / DSM 2151 / CCUG 4856 / JCM 11019 / LMG 10263 / NCTC 9343 / Onslow / VPI 2553 / EN-2)).